The primary structure comprises 598 residues: mRNA-capping enzyme (598 aa).

The TPase stretch occupies residues 1–215 (MSQTGAPPRW…GSASAPASEP (215 aa)). The region spanning 25–183 (LPMKTMLGPR…FRRYGDVEDA (159 aa)) is the Tyrosine-protein phosphatase domain. Cysteine 126 acts as the Phosphocysteine intermediate in catalysis. Residues 186–227 (APPLPEWCFDEDEEEDGEEDGSASAPASEPSSSHTGQSKKKK) are disordered. The span at 193–206 (CFDEDEEEDGEEDG) shows a compositional bias: acidic residues. The span at 207–218 (SASAPASEPSSS) shows a compositional bias: low complexity. The GTase stretch occupies residues 233-598 (GAVFLEGVSV…PKRSANSIPQ (366 aa)). Lysine 298 serves as the catalytic N6-GMP-lysine intermediate. Residues arginine 303, arginine 319, 347-349 (DGE), 462-464 (KWK), and 532-537 (RQRVDK) each bind GTP. The interval 575–598 (RKNPADSDLMPPPPPKRSANSIPQ) is disordered.

In the N-terminal section; belongs to the non-receptor class of the protein-tyrosine phosphatase family. It in the C-terminal section; belongs to the eukaryotic GTase family.

Its subcellular location is the nucleus. The catalysed reaction is a 5'-end triphospho-ribonucleoside in mRNA + H2O = a 5'-end diphospho-ribonucleoside in mRNA + phosphate + H(+). It catalyses the reaction a 5'-end diphospho-ribonucleoside in mRNA + GTP + H(+) = a 5'-end (5'-triphosphoguanosine)-ribonucleoside in mRNA + diphosphate. Its function is as follows. Bifunctional mRNA-capping enzyme exhibiting RNA 5'-triphosphate monophosphatase activity in the N-terminal part and mRNA guanylyltransferase activity in the C-terminal part. Catalyzes the first two steps of cap formation: by removing the gamma-phosphate from the 5'-triphosphate end of nascent mRNA to yield a diphosphate end, and by transferring the GMP moiety of GTP to the 5'-diphosphate terminus of RNA via a covalent enzyme-GMP reaction intermediate. The chain is mRNA-capping enzyme (rngtt) from Danio rerio (Zebrafish).